The following is a 439-amino-acid chain: Testican-1 (439 aa).

An N-terminal signal peptide occupies residues 1-21 (MPAIAVLAAAAAAWCFLQVES). Disulfide bonds link C86/C97, C91/C107, C136/C166, C139/C159, and C148/C180. In terms of domain architecture, Kazal-like spans 130 to 182 (PSNLVKCKPCPVAQSAMVCGSDGHSYTSKCKLEFHACSTGKSLATLCDGPCPC). A glycan (O-linked (GalNAc...) threonine) is linked at T228. Positions 310–376 (GLPCQNEMNR…GSRKQGAVSC (67 aa)) constitute a Thyroglobulin type-1 domain. 3 disulfides stabilise this stretch: C313–C337, C348–C355, and C357–C376. 2 O-linked (Xyl...) (glycosaminoglycan) serine glycosylation sites follow: S383 and S388. Positions 415–439 (VHTRAVTEDDEDEDDDKEDEVGYIW) are disordered. A compositionally biased stretch (acidic residues) spans 422–439 (EDDEDEDDDKEDEVGYIW).

O-glycosylated. Glycosaminoglycan that contains chondroitin sulfate and heparan sulfate.

Its subcellular location is the secreted. The protein resides in the extracellular space. The protein localises to the extracellular matrix. May play a role in cell-cell and cell-matrix interactions. May contribute to various neuronal mechanisms in the central nervous system. The polypeptide is Testican-1 (SPOCK1) (Homo sapiens (Human)).